A 412-amino-acid polypeptide reads, in one-letter code: Putative competence-damage inducible protein (412 aa).

It belongs to the CinA family.

This is Putative competence-damage inducible protein from Bacillus cereus (strain ATCC 10987 / NRS 248).